A 173-amino-acid chain; its full sequence is Helix-loop-helix protein lin-22 (173 aa).

Positions 21 to 34 (KKIKNKPLMEKKRR) are basic motif. Residues 21 to 78 (KKIKNKPLMEKKRRARINKSLSQLKQILIQDEHKNSIQHSKWEKADILEMAVEYLQQL) form the bHLH domain. Residues 35–78 (ARINKSLSQLKQILIQDEHKNSIQHSKWEKADILEMAVEYLQQL) are helix-loop-helix motif. The segment covering 83–95 (PCSLSPSTSSIST) has biased composition (low complexity). Residues 83–102 (PCSLSPSTSSISTPPTPKEE) form a disordered region.

Expressed mostly in the seam (stem) cells and hypodermis (hyp7), but also to a lesser extent in the intestine.

It is found in the nucleus. Probable transcription factor. During development, required for cell fate specification, probably by promoting or repressing expression of genes involved in specific cell fate. Involved in specifying lineages derived from the epidermal stem cells of the lateral ectoderm, known as seam cells. Modulates symmetric divisions of seam cells, perhaps in concert with the Wnt signaling pathway. May repress expression of homeobox genes mab-5, egl-5 and lin-39. This Caenorhabditis elegans protein is Helix-loop-helix protein lin-22.